The chain runs to 239 residues: Octanoyl-[acyl-carrier-protein]:protein N-octanoyltransferase LIPT2, mitochondrial (239 aa).

The N-terminal 18 residues, 1–18, are a transit peptide targeting the mitochondrion; it reads MSVPVLRVRRLGLVGYAE. The region spanning 37–217 is the BPL/LPL catalytic domain; it reads GSPGGALLLC…AFEEEFQCQL (181 aa). Substrate contacts are provided by residues 81–88, 147–149, and 160–162; these read RGGLITFH, AIG, and GLA. The Acyl-thioester intermediate role is filled by C178. Positions 220–239 are disordered; the sequence is EQNPEQNPVQNRPDRDAGPL.

The protein belongs to the LipB family.

Its subcellular location is the mitochondrion. The enzyme catalyses octanoyl-[ACP] + L-lysyl-[protein] = N(6)-octanoyl-L-lysyl-[protein] + holo-[ACP] + H(+). It functions in the pathway protein modification; protein lipoylation via endogenous pathway; protein N(6)-(lipoyl)lysine from octanoyl-[acyl-carrier-protein]: step 1/2. Its function is as follows. Catalyzes the transfer of endogenously produced octanoic acid from octanoyl-acyl-carrier-protein (octanoyl-ACP) onto the lipoyl domains of lipoate-dependent enzymes such as the protein H of the glycine cleavage system (GCSH). Lipoyl-ACP can also act as a substrate although octanoyl-ACP is likely to be the physiological substrate. This is Octanoyl-[acyl-carrier-protein]:protein N-octanoyltransferase LIPT2, mitochondrial (lipt2) from Xenopus tropicalis (Western clawed frog).